Consider the following 476-residue polypeptide: Rab-3A-interacting protein (476 aa).

Ser-163 and Ser-165 each carry phosphoserine; by PKB/AKT1. Positions Ser-165–Leu-260 form a coiled coil. A disordered region spans residues Ser-262–His-297. 4 positions are modified to phosphoserine: Ser-263, Ser-266, Ser-288, and Ser-296. Residues Lys-287–His-297 are compositionally biased toward polar residues. An important for RAB11A binding region spans residues Thr-435–Leu-444.

This sequence belongs to the SEC2 family. As to quaternary structure, homodimer. Interacts with the N-terminal region of SSX2. Interacts with the GDP-bound forms of RAB8A and RAB8B. The interaction with RAB8A is prevented by phosphorylation of RAB8A at 'Thr-72'. Interacts with the GDP-bound forms of RAB3A and RAB3D. Interacts with DCDC1. Interacts (via the N-terminal region) with TRAPPC14; this interaction mediates RAB3IP association with the TRAPP II complex. Forms a heterotetramer with RAB11A where RAB3IP homodimer binds two RAB11A subunits. Forms a complex with RAB11A and RAB11FIP3, probably a heterohexamer with two of each protein subunit, where Rabin8/RAB3IP and RAB11FIP3 simultaneously bind to RAB11A; the complex promotes preciliary trafficking. Forms a complex containing RAB11A, ASAP1, RAB3IP, RAP11FIP3 and ARF4; the complex promotes preciliary trafficking; the complex binds to RHO in photoreceptor cells and promotes RHO ciliary transport. Post-translationally, phosphorylated by AKT1; the phosphorylation alters its GEF activity. In terms of tissue distribution, expressed in brain, kidney, heart, pancreas and placenta. Not detected in skeletal muscle or liver.

Its subcellular location is the cytoplasm. The protein localises to the nucleus. It is found in the cytoskeleton. The protein resides in the cell projection. It localises to the lamellipodium. Its subcellular location is the vesicle. The protein localises to the microtubule organizing center. It is found in the centrosome. Its activity is regulated as follows. Phosphorylation by ATK1 alters its GEF activity. Complex formation with RAB11A and RAB11FIP3 and ciliogenesis function are competitively inhibited by RAB11A-WDR44 interaction. Guanine nucleotide exchange factor (GEF) which may activate RAB8A and RAB8B. Promotes the exchange of GDP to GTP, converting inactive GDP-bound Rab proteins into their active GTP-bound form. Mediates the release of GDP from RAB8A and RAB8B but not from RAB3A or RAB5. Modulates actin organization and promotes polarized transport of RAB8A-specific vesicles to the cell surface. Together with RAB11A, RAB8A, the exocyst complex, PARD3, PRKCI, ANXA2, CDC42 and DNMBP promotes transcytosis of PODXL to the apical membrane initiation sites (AMIS), apical surface formation and lumenogenesis. Part of the ciliary targeting complex containing Rab11, ASAP1, RAB3IP and RAB11FIP3 and ARF4 that promotes RAB3IP preciliary vesicle trafficking to mother centriole and ciliogenesis initiation. In Homo sapiens (Human), this protein is Rab-3A-interacting protein.